A 560-amino-acid polypeptide reads, in one-letter code: Probable 2,3-bisphosphoglycerate-independent phosphoglycerate mutase 2 (560 aa).

The residue at position 2 (G2) is an N-acetylglycine. Mn(2+) contacts are provided by D29 and S82. The Phosphoserine intermediate role is filled by S82. Substrate contacts are provided by residues H141, 171 to 172 (RD), R207, R214, 287 to 290 (RADR), and K362. Mn(2+) contacts are provided by D431, H435, D472, H473, and H502.

Belongs to the BPG-independent phosphoglycerate mutase family. Monomer. The cofactor is Mn(2+).

It localises to the cytoplasm. The enzyme catalyses (2R)-2-phosphoglycerate = (2R)-3-phosphoglycerate. It functions in the pathway carbohydrate degradation; glycolysis; pyruvate from D-glyceraldehyde 3-phosphate: step 3/5. Catalyzes the interconversion of 2-phosphoglycerate (2-PGA) and 3-phosphoglycerate (3-PGA). Required for guard cell function (e.g. blue light-, abscisic acid- (ABA), and low CO(2)-regulated stomatal movements) and fertility (e.g. pollen grains production). The protein is Probable 2,3-bisphosphoglycerate-independent phosphoglycerate mutase 2 (PGM2) of Arabidopsis thaliana (Mouse-ear cress).